Here is a 295-residue protein sequence, read N- to C-terminus: G1/S-specific cyclin-D1 (295 aa).

The region spanning 28–152 (LRAMLKAEET…LLVNKLKWNL (125 aa)) is the Cyclin N-terminal domain. The segment at 262–295 (AQQNMDPKAAEEEEEEEEEVDLACTPTDVRDVDI) is disordered. Lys269 is covalently cross-linked (Glycyl lysine isopeptide (Lys-Gly) (interchain with G-Cter in ubiquitin)). Acidic residues predominate over residues 272 to 282 (EEEEEEEEEVD). Thr286 bears the Phosphothreonine mark.

Belongs to the cyclin family. Cyclin D subfamily. As to quaternary structure, interacts with either CDK4 or CDK6 protein kinase to form a serine/threonine kinase holoenzyme complex. The cyclin subunit imparts substrate specificity to the complex. Component of the ternary complex CCND1/CDK4/CDKN1B required for nuclear translocation and modulation of CDK4-mediated kinase activity. Interacts directly with CDKN1B. Can form similar complexes with either CDKN1A or CDKN2A. Interacts with UHRF2; the interaction ubiquitinates CCND1 and appears to occur independently of phosphorylation. Interacts with USP2. Interacts (via cyclin N-terminal domain) with INSM1 (via N-terminal region); the interaction competes with the binding of CCND1 to CDK4 during cell cycle progression and inhibits CDK4 activity. Interacts with CDK4; the interaction is prevented with the binding of CCND1 to INSM1 during cell cycle progression. In terms of processing, phosphorylation at Thr-286 by MAP kinases is required for ubiquitination and degradation by the DCX(AMBRA1) complex. It also plays an essential role for recognition by the FBXO31 component of SCF (SKP1-cullin-F-box) protein ligase complex following DNA damage. Post-translationally, ubiquitinated at Lys-269 by the DCX(AMBRA1) complex during the transition from G1 to S cell phase, leading to its degradation: ubiquitination is dependent on Thr-286 phosphorylation. The DCX(AMBRA1) complex represents the major regulator of CCND1 stability during the G1/S transition. Also ubiquitinated by the SCF(FBXO4) and Cul7-RING(FBXW8) ubiquitin-protein ligase complexes. Following DNA damage it is ubiquitinated by the SCF(FBXO31) protein ligase complex. SCF(FBXO31) ubiquitination is dependent on Thr-286 phosphorylation. Ubiquitinated also by UHRF2 apparently in a phosphorylation-independent manner. Ubiquitination leads to its degradation and G1 arrest. Deubiquitinated by USP2; leading to its stabilization.

The protein localises to the nucleus. It is found in the cytoplasm. It localises to the nucleus membrane. Its function is as follows. Regulatory component of the cyclin D1-CDK4 (DC) complex that phosphorylates and inhibits members of the retinoblastoma (RB) protein family including RB1 and regulates the cell-cycle during G(1)/S transition. Phosphorylation of RB1 allows dissociation of the transcription factor E2F from the RB/E2F complex and the subsequent transcription of E2F target genes which are responsible for the progression through the G(1) phase. Hypophosphorylates RB1 in early G(1) phase. Cyclin D-CDK4 complexes are major integrators of various mitogenenic and antimitogenic signals. Also a substrate for SMAD3, phosphorylating SMAD3 in a cell-cycle-dependent manner and repressing its transcriptional activity. Component of the ternary complex, cyclin D1/CDK4/CDKN1B, required for nuclear translocation and activity of the cyclin D-CDK4 complex. Exhibits transcriptional corepressor activity with INSM1 on the NEUROD1 and INS promoters in a cell cycle-independent manner. This chain is G1/S-specific cyclin-D1 (CCND1), found in Pongo abelii (Sumatran orangutan).